The primary structure comprises 134 residues: uncharacterized protein (134 aa).

Residues 4–107 enclose the HIT domain; sequence IFTKIINREL…PTHSLSNFSF (104 aa). Positions 91-95 match the Histidine triad motif motif; the sequence is HLHIH.

This is an uncharacterized protein from Mycobacterium leprae (strain TN).